A 622-amino-acid chain; its full sequence is Cilia- and flagella-associated protein 206 (622 aa).

The interval 570-592 is disordered; that stretch reads SQVYPPKDTSTQSMREDSTGVPR.

It belongs to the CFAP206 family.

The protein resides in the cytoplasm. It localises to the cytoskeleton. Its subcellular location is the cilium axoneme. It is found in the cilium basal body. Its function is as follows. Essential for sperm motility and is involved in the regulation of the beating frequency of motile cilia on the epithelial cells of the respiratory tract. Required for the establishment of radial spokes in sperm flagella. This is Cilia- and flagella-associated protein 206 from Homo sapiens (Human).